The primary structure comprises 504 residues: Glucose-6-phosphate isomerase (504 aa).

Glu333 serves as the catalytic Proton donor. Residues His364 and Lys473 contribute to the active site.

It belongs to the GPI family.

The protein localises to the cytoplasm. The enzyme catalyses alpha-D-glucose 6-phosphate = beta-D-fructose 6-phosphate. Its pathway is carbohydrate biosynthesis; gluconeogenesis. It participates in carbohydrate degradation; glycolysis; D-glyceraldehyde 3-phosphate and glycerone phosphate from D-glucose: step 2/4. In terms of biological role, catalyzes the reversible isomerization of glucose-6-phosphate to fructose-6-phosphate. This is Glucose-6-phosphate isomerase from Xanthomonas oryzae pv. oryzae (strain MAFF 311018).